The following is an 87-amino-acid chain: Retinal rod rhodopsin-sensitive cGMP 3',5'-cyclic phosphodiesterase subunit gamma (87 aa).

M1 is modified (N-acetylmethionine). The tract at residues 16 to 54 (VVGGPVTPRKGPPKFKQRQTRQFKSKPPKKGVQGFGDDI) is disordered. Residues 26–44 (GPPKFKQRQTRQFKSKPPK) show a composition bias toward basic residues.

It belongs to the rod/cone cGMP-PDE gamma subunit family. In terms of assembly, oligomer composed of two catalytic chains (alpha and beta), an inhibitory chain (gamma) and the delta chain.

It catalyses the reaction 3',5'-cyclic GMP + H2O = GMP + H(+). Functionally, participates in processes of transmission and amplification of the visual signal. cGMP-PDEs are the effector molecules in G-protein-mediated phototransduction in vertebrate rods and cones. The chain is Retinal rod rhodopsin-sensitive cGMP 3',5'-cyclic phosphodiesterase subunit gamma (PDE6G) from Cavia porcellus (Guinea pig).